An 804-amino-acid chain; its full sequence is Cas scaffolding protein family member 4 (804 aa).

Residues 11–73 (PKTLLARALY…PANRLQVLRE (63 aa)) form the SH3 domain. A phosphoserine mark is found at Ser-200 and Ser-297. Disordered stretches follow at residues 369–395 (LERG…DSDR), 607–628 (QRET…TEHS), and 642–686 (QQSP…TERK). A compositionally biased stretch (polar residues) spans 380–390 (PWISGQTSFLS). Residues 649 to 664 (EKGKPTMEGKSNRNPD) show a composition bias toward basic and acidic residues.

It belongs to the CAS family. As to quaternary structure, interacts (via SH3 domain) with PTK2/FAK1 (via C-terminus). Phosphorylated on tyrosines by SRC.

It is found in the cytoplasm. The protein localises to the cytoskeleton. Its subcellular location is the cell junction. The protein resides in the focal adhesion. Functionally, docking protein that plays a role in tyrosine kinase-based signaling related to cell adhesion and cell spreading. Regulates PTK2/FAK1 activity, focal adhesion integrity, and cell spreading. In Mus musculus (Mouse), this protein is Cas scaffolding protein family member 4.